The primary structure comprises 2025 residues: E3 ubiquitin-protein ligase TTC3 (2025 aa).

An interaction with POLG region spans residues 1–230 (MDNFAEGDFT…TQSCMDCIEE (230 aa)). 2 TPR repeats span residues 231–264 (GELM…RPEN) and 266–298 (LLYG…KNTW). Ser378 bears the Phosphoserine; by PKB/AKT2 mark. Residues 423–458 (DCHPEFSPPSSQPPKHKGKQKSRNNESEKFSSSSPL) form a disordered region. TPR repeat units follow at residues 536–572 (VLVV…YPSE) and 576–609 (CLAY…IYRL). The segment at 786-805 (ERMEEDLRESNPPKNEEQKE) is disordered. The segment covering 793-805 (RESNPPKNEEQKE) has biased composition (basic and acidic residues). Ser1009 carries the post-translational modification Phosphoserine. Disordered stretches follow at residues 1012 to 1068 (APFS…GPFA), 1215 to 1295 (KPDV…SCNS), 1773 to 1842 (DPSV…SPKK), and 1894 to 1944 (ILDE…QKAE). A compositionally biased stretch (basic residues) spans 1019-1029 (VKNKSKKKKPK). Polar residues predominate over residues 1038 to 1052 (SGTTSVTSNNEIITS). Phosphoserine is present on Ser1061. Residues 1894 to 1912 (ILDEQKKKKPNPGKDKRTY) show a composition bias toward basic and acidic residues. The span at 1913–1928 (EPSSATPVTRSSQGSP) shows a compositional bias: polar residues. The segment at 1957 to 1997 (CEICHEVFKSKNVRVLKCGHKYHKGCFKQWLKGQSACPACQ) adopts an RING-type zinc-finger fold. The tract at residues 2004–2025 (EESPSGRGWPSQNQELPSCSSR) is disordered. The span at 2013 to 2025 (PSQNQELPSCSSR) shows a compositional bias: polar residues.

As to quaternary structure, interacts (when phosphorylated on Ser-378) with AKT1, AKT2 and AKT3 (when phosphorylated). Interacts with CIT. Interacts with POLG. Interacts with HSP70. Interacts with SMURF2. Post-translationally, phosphorylation on Ser-378 by Akt is required for ubiquitin ligase activity. In terms of processing, proteolytically cleaved into differently sized N- and C-terminal fragments. As to expression, found in all tissues examined.

It localises to the nucleus. Its subcellular location is the cytoplasm. It is found in the golgi apparatus. It carries out the reaction S-ubiquitinyl-[E2 ubiquitin-conjugating enzyme]-L-cysteine + [acceptor protein]-L-lysine = [E2 ubiquitin-conjugating enzyme]-L-cysteine + N(6)-ubiquitinyl-[acceptor protein]-L-lysine.. The protein operates within protein modification; protein ubiquitination. Functionally, E3 ubiquitin-protein ligase which catalyzes the formation of 'Lys-48'-polyubiquitin chains. Mediates the ubiquitination and subsequent degradation of phosphorylated Akt (AKT1, AKT2 and AKT3) in the nucleus. Acts as a terminal regulator of Akt signaling after activation; its phosphorylation by Akt, which is a prerequisite for ubiquitin ligase activity, suggests the existence of a regulation mechanism required to control Akt levels after activation. Positively regulates TGFB1-induced epithelial-mesenchymal transition and myofibroblast differentiation by mediating the ubiquitination and subsequent degradation of SMURF2. Regulates neuronal differentiation by regulating actin remodeling and Golgi organization via a signaling cascade involving RHOA, CIT and ROCK. Inhibits cell proliferation. The polypeptide is E3 ubiquitin-protein ligase TTC3 (TTC3) (Homo sapiens (Human)).